The chain runs to 505 residues: Calcium/calmodulin-dependent protein kinase kinase 1 (505 aa).

Residues 26–61 (THLEEADGGPEPTRNGVDPPPRARAASVIPGSTSRL) form a disordered region. 2 positions are modified to phosphoserine: Ser67 and Ser74. Position 78 is an asymmetric dimethylarginine (Arg78). Ser100 carries the phosphoserine modification. Thr108 is modified (phosphothreonine). Positions 128 to 409 (YKLQSEIGKG…VPDIKLHPWV (282 aa)) constitute a Protein kinase domain. ATP is bound by residues 134 to 142 (IGKGAYGVV) and Lys157. The segment at 167 to 189 (QYGFPRRPPPRGSQAAQGGPAKQ) is RP domain. Catalysis depends on Asp275, which acts as the Proton acceptor. The segment at 435–440 (KNSVRL) is autoinhibitory domain. The tract at residues 438-463 (VRLIPSWTTVILVKSMLRKRSFGNPF) is calmodulin-binding. 3 positions are modified to phosphoserine: Ser458, Ser475, and Ser492. Residues 460–505 (GNPFEPQARREERSMSAPGNLLVKEGFGEGGKSPELPGVQEDEAAS) are disordered.

The protein belongs to the protein kinase superfamily. Ser/Thr protein kinase family. As to quaternary structure, interacts with CAMK4 and calmodulin. In terms of processing, appears to be autophosphorylated in a Ca(2+)/calmodulin-dependent manner. Phosphorylated at multiple sites by PRCAKA/PKA. Phosphorylation of Ser-458 is blocked upon binding to Ca(2+)/calmodulin. In vitro, phosphorylated by CAMK1 and CAMK4.

Its subcellular location is the cytoplasm. It is found in the nucleus. The enzyme catalyses L-seryl-[protein] + ATP = O-phospho-L-seryl-[protein] + ADP + H(+). It catalyses the reaction L-threonyl-[protein] + ATP = O-phospho-L-threonyl-[protein] + ADP + H(+). Activated by Ca(2+)/calmodulin. Binding of calmodulin may relieve intrasteric autoinhibition. Partially inhibited upon phosphorylation by PRCAKA/PKA. May be regulated through phosphorylation by CAMK1 and CAMK4. Functionally, calcium/calmodulin-dependent protein kinase that belongs to a proposed calcium-triggered signaling cascade involved in a number of cellular processes. Phosphorylates CAMK1, CAMK1D, CAMK1G and CAMK4. Involved in regulating cell apoptosis. Promotes cell survival by phosphorylating AKT1/PKB that inhibits pro-apoptotic BAD/Bcl2-antagonist of cell death. This Homo sapiens (Human) protein is Calcium/calmodulin-dependent protein kinase kinase 1 (CAMKK1).